We begin with the raw amino-acid sequence, 314 residues long: Basic endochitinase (314 aa).

Positions 1 to 20 are cleaved as a signal peptide; that stretch reads MGLWALVAFCLLSLILVGSA. The Chitin-binding type-1 domain maps to 21–61; sequence EQCGGQAGGRVCPGGACCSKFGWCGNTADYCGSGCQSQCSS. Intrachain disulfides connect C23/C38, C32/C44, C37/C51, C55/C59, C86/C148, C160/C168, and C267/C299. The active-site Proton donor is E130.

It belongs to the glycosyl hydrolase 19 family. Chitinase class I subfamily.

The enzyme catalyses Random endo-hydrolysis of N-acetyl-beta-D-glucosaminide (1-&gt;4)-beta-linkages in chitin and chitodextrins.. Its function is as follows. Defense against chitin-containing fungal pathogens. This chain is Basic endochitinase (CHIT1B), found in Vitis vinifera (Grape).